The following is a 732-amino-acid chain: Phosphoribosylformylglycinamidine synthase subunit PurL (732 aa).

Residue His42 is part of the active site. The ATP site is built by Tyr45 and Lys84. Glu86 provides a ligand contact to Mg(2+). Residues 87–90 and Arg109 contribute to the substrate site; that span reads SHNH. His88 (proton acceptor) is an active-site residue. Residue Asp110 participates in Mg(2+) binding. Residue Gln238 participates in substrate binding. A Mg(2+)-binding site is contributed by Asp266. 310–312 is a binding site for substrate; that stretch reads ESQ. Asp496 and Gly533 together coordinate ATP. Position 534 (Asn534) interacts with Mg(2+). Ser536 is a substrate binding site.

The protein belongs to the FGAMS family. In terms of assembly, monomer. Part of the FGAM synthase complex composed of 1 PurL, 1 PurQ and 2 PurS subunits.

It is found in the cytoplasm. It catalyses the reaction N(2)-formyl-N(1)-(5-phospho-beta-D-ribosyl)glycinamide + L-glutamine + ATP + H2O = 2-formamido-N(1)-(5-O-phospho-beta-D-ribosyl)acetamidine + L-glutamate + ADP + phosphate + H(+). It participates in purine metabolism; IMP biosynthesis via de novo pathway; 5-amino-1-(5-phospho-D-ribosyl)imidazole from N(2)-formyl-N(1)-(5-phospho-D-ribosyl)glycinamide: step 1/2. Its function is as follows. Part of the phosphoribosylformylglycinamidine synthase complex involved in the purines biosynthetic pathway. Catalyzes the ATP-dependent conversion of formylglycinamide ribonucleotide (FGAR) and glutamine to yield formylglycinamidine ribonucleotide (FGAM) and glutamate. The FGAM synthase complex is composed of three subunits. PurQ produces an ammonia molecule by converting glutamine to glutamate. PurL transfers the ammonia molecule to FGAR to form FGAM in an ATP-dependent manner. PurS interacts with PurQ and PurL and is thought to assist in the transfer of the ammonia molecule from PurQ to PurL. The protein is Phosphoribosylformylglycinamidine synthase subunit PurL of Campylobacter hominis (strain ATCC BAA-381 / DSM 21671 / CCUG 45161 / LMG 19568 / NCTC 13146 / CH001A).